The chain runs to 434 residues: Enolase (434 aa).

Gln163 is a binding site for (2R)-2-phosphoglycerate. Glu205 serves as the catalytic Proton donor. Mg(2+) contacts are provided by Asp242, Glu291, and Asp318. (2R)-2-phosphoglycerate is bound by residues Lys343, Arg372, Ser373, and Lys394. The Proton acceptor role is filled by Lys343.

Belongs to the enolase family. Mg(2+) serves as cofactor.

It localises to the cytoplasm. It is found in the secreted. The protein resides in the cell surface. The protein localises to the cell wall. It catalyses the reaction (2R)-2-phosphoglycerate = phosphoenolpyruvate + H2O. It participates in carbohydrate degradation; glycolysis; pyruvate from D-glyceraldehyde 3-phosphate: step 4/5. Catalyzes the reversible conversion of 2-phosphoglycerate (2-PG) into phosphoenolpyruvate (PEP). It is essential for the degradation of carbohydrates via glycolysis. This is Enolase from Streptococcus pneumoniae serotype 2 (strain D39 / NCTC 7466).